A 530-amino-acid chain; its full sequence is uncharacterized protein (530 aa).

The protein belongs to the mimivirus R640 family.

This is an uncharacterized protein from Acanthamoeba polyphaga (Amoeba).